The primary structure comprises 81 residues: MASKDEILAGLAEIVNEETGLETEAVQLEKSFTEDLDIDSISMMTIVVNAEEKFDVTIPDEEVKNLKTVEDAVNFIDNAQA.

The Carrier domain maps to 2–80 (ASKDEILAGL…DAVNFIDNAQ (79 aa)). Residue S40 is modified to O-(pantetheine 4'-phosphoryl)serine.

Belongs to the acyl carrier protein (ACP) family. 4'-phosphopantetheine is transferred from CoA to a specific serine of apo-ACP by AcpS. This modification is essential for activity because fatty acids are bound in thioester linkage to the sulfhydryl of the prosthetic group.

Its subcellular location is the cytoplasm. The protein operates within lipid metabolism; fatty acid biosynthesis. In terms of biological role, carrier of the growing fatty acid chain in fatty acid biosynthesis. In Kocuria rhizophila (strain ATCC 9341 / DSM 348 / NBRC 103217 / DC2201), this protein is Acyl carrier protein.